Here is a 612-residue protein sequence, read N- to C-terminus: MASITANHPISGKPLISFRPKNPLLQTQTLFNFKPSISKHSNSSFSIPVVRCSIRRIPEYTPSHIPDPNYVRIFDTTLRDGEQSPGATMTTKEKLDVARQSAKLGVDIIEAGFPASSEADLEAVKLIAKEVGNGVYEEEYVPVICGLARCNKKDIDKAWEAVKYAKKPRIHTFIATSEVHMNYKLKMSRDQVVEKARSMVAYARSIGCEDVEFSPEDAGRSDPEFLYHILGEVIKAGATTLNIPDTVGYTVPEEFGQLIAKIKANTPGVEDVIISTHCQNDLGLSTANTLAGACAGARQLEVTINGIGERAGNASLEEVVMALKCRGEQVLGGLYTGINTQHILMSSKMVEGISGLHVQPHKAIVGANAFVHESGIHQDGMLKHKDTYEIISPEDIGLNRANESGIVFGKLSGVMLCKPKMLELGYEIEGKELDDLFWRFKSVAEKKKKITDDDLVALMSDEVFQPQFVWQLQNVQVTCGSLGLSTATVKLIDADGREHISCSVGTGPVDAAYKAVDLIVKVPVTLLEYSMNAVTQGIDAIASTRVLIRGENGHTSTHALTGETVHRTFSGTGADMDIVISSVRAYVGALNKMMSFRKLMAKNNKPESSAVI.

One can recognise a Pyruvate carboxyltransferase domain in the interval 71-344 (VRIFDTTLRD…YTGINTQHIL (274 aa)). Positions 80, 277, and 313 each coordinate a divalent metal cation.

This sequence belongs to the alpha-IPM synthase/homocitrate synthase family. LeuA type 1 subfamily. Homodimer. Requires a divalent metal cation as cofactor.

It catalyses the reaction 3-methyl-2-oxobutanoate + acetyl-CoA + H2O = (2S)-2-isopropylmalate + CoA + H(+). Its pathway is amino-acid biosynthesis; L-leucine biosynthesis; L-leucine from 3-methyl-2-oxobutanoate: step 1/4. Functionally, catalyzes the condensation of the acetyl group of acetyl-CoA with 3-methyl-2-oxobutanoate (2-oxoisovalerate) to form 3-carboxy-3-hydroxy-4-methylpentanoate (2-isopropylmalate). In Solanum pennellii (Tomato), this protein is 2-isopropylmalate synthase B (IPMSB).